Consider the following 371-residue polypeptide: GTPase Obg (371 aa).

The 159-residue stretch at 1–159 folds into the Obg domain; that stretch reads MKFVDEAYID…KNLKLELKVL (159 aa). The OBG-type G domain occupies 160–334; that stretch reads ADVGLLGMPN…LIRTIYKHVH (175 aa). GTP is bound by residues 166–173, 191–195, 213–216, 284–287, and 315–317; these read GMPNAGKS, FTTLH, DIPG, NKLD, and SAL. The Mg(2+) site is built by serine 173 and threonine 193.

This sequence belongs to the TRAFAC class OBG-HflX-like GTPase superfamily. OBG GTPase family. Monomer. It depends on Mg(2+) as a cofactor.

The protein resides in the cytoplasm. Its function is as follows. An essential GTPase which binds GTP, GDP and possibly (p)ppGpp with moderate affinity, with high nucleotide exchange rates and a fairly low GTP hydrolysis rate. Plays a role in control of the cell cycle, stress response, ribosome biogenesis and in those bacteria that undergo differentiation, in morphogenesis control. The polypeptide is GTPase Obg (Delftia acidovorans (strain DSM 14801 / SPH-1)).